Here is a 929-residue protein sequence, read N- to C-terminus: DNA mismatch repair protein MutS (929 aa).

The tract at residues 22–46 is disordered; sequence PAAPRSTGSAAAPPPSPAVLDDRSG. The segment covering 23–32 has biased composition (low complexity); the sequence is AAPRSTGSAA. 678–685 is a binding site for ATP; the sequence is GPNMAGKS.

The protein belongs to the DNA mismatch repair MutS family.

Its function is as follows. This protein is involved in the repair of mismatches in DNA. It is possible that it carries out the mismatch recognition step. This protein has a weak ATPase activity. This chain is DNA mismatch repair protein MutS, found in Rhodospirillum rubrum (strain ATCC 11170 / ATH 1.1.1 / DSM 467 / LMG 4362 / NCIMB 8255 / S1).